A 473-amino-acid chain; its full sequence is Hyaluronidase-2 (473 aa).

The first 20 residues, 1–20, serve as a signal peptide directing secretion; the sequence is MRAGPGPTVTLALVLAVSWA. Disulfide bonds link Cys47–Cys340 and Cys211–Cys227. Asn74 and Asn103 each carry an N-linked (GlcNAc...) asparagine glycan. Glu135 serves as the catalytic Proton donor. A glycan (N-linked (GlcNAc...) asparagine) is linked at Asn357. An EGF-like domain is found at 361–439; it reads ATQYCSRAQC…YLGWSGEQCQ (79 aa). 3 cysteine pairs are disulfide-bonded: Cys365–Cys376, Cys370–Cys427, and Cys429–Cys438. Residue Gly448 is the site of GPI-anchor amidated glycine attachment. A propeptide spans 449–473 (removed in mature form); that stretch reads ASEAWAGSHLTSLLALAALAFTWTL.

This sequence belongs to the glycosyl hydrolase 56 family. In terms of assembly, interacts with MST1R. Widely expressed (at protein level).

It is found in the cell membrane. It carries out the reaction Random hydrolysis of (1-&gt;4)-linkages between N-acetyl-beta-D-glucosamine and D-glucuronate residues in hyaluronate.. Its function is as follows. Catalyzes hyaluronan degradation into small fragments that are endocytosed and degraded in lysosomes by HYAL1 and exoglycosidases. Essential for the breakdown of extracellular matrix hyaluronan. The protein is Hyaluronidase-2 (HYAL2) of Homo sapiens (Human).